A 354-amino-acid chain; its full sequence is Methionine aminotransferase BCAT4 (354 aa).

Lysine 198 is modified (N6-(pyridoxal phosphate)lysine).

The protein belongs to the class-IV pyridoxal-phosphate-dependent aminotransferase family. The cofactor is pyridoxal 5'-phosphate. Mostly expressed in phloem.

It is found in the cytoplasm. The catalysed reaction is a 2-oxocarboxylate + L-methionine = 4-methylsulfanyl-2-oxobutanoate + an L-alpha-amino acid. Functionally, converts 2-oxo acids to branched-chain amino acids. Shows activity with L-Leu, L-Ile and L-Val as amino donors and alpha-keto-glutarate as an amino acceptor, but no activity for D-isomers of Leu, Ile, Val, Asp, Glu or Ala. Acts on methionine and its derivatives and the corresponding 2-oxo acids. Catalyzes the initial deamination of methionine to 4-methylthio-2-oxobutyrate as well as the transamination of other typical intermediates of the methionine chain elongation pathway. The polypeptide is Methionine aminotransferase BCAT4 (BCAT4) (Arabidopsis thaliana (Mouse-ear cress)).